A 451-amino-acid polypeptide reads, in one-letter code: UDP-N-acetylmuramoylalanine--D-glutamate ligase (451 aa).

118 to 124 lines the ATP pocket; it reads GTKGKST.

Belongs to the MurCDEF family.

It is found in the cytoplasm. It catalyses the reaction UDP-N-acetyl-alpha-D-muramoyl-L-alanine + D-glutamate + ATP = UDP-N-acetyl-alpha-D-muramoyl-L-alanyl-D-glutamate + ADP + phosphate + H(+). Its pathway is cell wall biogenesis; peptidoglycan biosynthesis. In terms of biological role, cell wall formation. Catalyzes the addition of glutamate to the nucleotide precursor UDP-N-acetylmuramoyl-L-alanine (UMA). The protein is UDP-N-acetylmuramoylalanine--D-glutamate ligase of Borreliella afzelii (strain PKo) (Borrelia afzelii).